A 411-amino-acid chain; its full sequence is Branched-chain-amino-acid aminotransferase, cytosolic (411 aa).

K247 is subject to N6-(pyridoxal phosphate)lysine.

Belongs to the class-IV pyridoxal-phosphate-dependent aminotransferase family. In terms of assembly, homodimer. Pyridoxal 5'-phosphate serves as cofactor. The N-terminus is blocked. As to expression, brain, low expression in ovary and placenta, but not found in liver, kidney, and skeletal muscle.

The protein localises to the cytoplasm. The catalysed reaction is L-leucine + 2-oxoglutarate = 4-methyl-2-oxopentanoate + L-glutamate. It carries out the reaction L-isoleucine + 2-oxoglutarate = (S)-3-methyl-2-oxopentanoate + L-glutamate. The enzyme catalyses L-valine + 2-oxoglutarate = 3-methyl-2-oxobutanoate + L-glutamate. In terms of biological role, catalyzes the first reaction in the catabolism of the essential branched chain amino acids leucine, isoleucine, and valine. This Rattus norvegicus (Rat) protein is Branched-chain-amino-acid aminotransferase, cytosolic (Bcat1).